A 203-amino-acid polypeptide reads, in one-letter code: dITP/XTP pyrophosphatase (203 aa).

8-13 (TANKGK) is a substrate binding site. 2 residues coordinate Mg(2+): glutamate 41 and aspartate 70. Aspartate 70 functions as the Proton acceptor in the catalytic mechanism. Substrate-binding positions include serine 71, 153–156 (FGYD), lysine 176, and 181–182 (HR).

It belongs to the HAM1 NTPase family. In terms of assembly, homodimer. Mg(2+) is required as a cofactor.

The catalysed reaction is XTP + H2O = XMP + diphosphate + H(+). It catalyses the reaction dITP + H2O = dIMP + diphosphate + H(+). The enzyme catalyses ITP + H2O = IMP + diphosphate + H(+). Pyrophosphatase that catalyzes the hydrolysis of nucleoside triphosphates to their monophosphate derivatives, with a high preference for the non-canonical purine nucleotides XTP (xanthosine triphosphate), dITP (deoxyinosine triphosphate) and ITP. Seems to function as a house-cleaning enzyme that removes non-canonical purine nucleotides from the nucleotide pool, thus preventing their incorporation into DNA/RNA and avoiding chromosomal lesions. This is dITP/XTP pyrophosphatase from Listeria monocytogenes serovar 1/2a (strain ATCC BAA-679 / EGD-e).